Reading from the N-terminus, the 105-residue chain is Nucleoid-associated protein SaurJH1_0513 (105 aa).

Residues 1–33 (MRGGGNMQQMMKQMQKMQKKMAQEQKKLKEERI) are disordered. Residues 7-16 (MQQMMKQMQK) show a composition bias toward low complexity. The span at 21–33 (MAQEQKKLKEERI) shows a compositional bias: basic and acidic residues.

Belongs to the YbaB/EbfC family. In terms of assembly, homodimer.

It is found in the cytoplasm. The protein localises to the nucleoid. Its function is as follows. Binds to DNA and alters its conformation. May be involved in regulation of gene expression, nucleoid organization and DNA protection. This chain is Nucleoid-associated protein SaurJH1_0513, found in Staphylococcus aureus (strain JH1).